A 315-amino-acid chain; its full sequence is MEIIIISGRSGAGKSVALRALEDTGYYCVDNIPLDLLPQLTDILSQSQSSVAISLDIRNIPNSAHSLKQTLSTLQKHHQIKIIFLEADRATLIRRYSDSRRLHPLSLKDLSLEAAIDEEYRYLEPLIQHANLILDTTHLSTHSLAERLREFLRGNSEKELKIIVESFGFKYGIPLDADYVFDVRFLPNPHWDPTLRPMTGLEAPVAEFLNSHTEVNEFIYLTRHYIDTWLPMLEKNNRSYLTIAIGCTGGKHRSVYIAQQLGEYFQAKGKTVKIQHKSLERNKKIIKSAVIKTLFLLTALFLHAHRLYNFTRITA.

ATP is bound at residue 8-15 (GRSGAGKS). GTP is bound at residue 56–59 (DIRN).

The protein belongs to the RapZ-like family.

Displays ATPase and GTPase activities. The sequence is that of Nucleotide-binding protein CGSHiEE_06315 from Haemophilus influenzae (strain PittEE).